The following is a 130-amino-acid chain: Protein ApaG (130 aa).

Residues S3–R127 enclose the ApaG domain.

This chain is Protein ApaG, found in Brucella canis (strain ATCC 23365 / NCTC 10854 / RM-666).